Consider the following 122-residue polypeptide: Small ribosomal subunit protein uS13 (122 aa).

Positions 92–122 (HRNGLPVRGQRTHTNARTRKGKAKPIAGKKK) are disordered. Basic residues predominate over residues 101 to 122 (QRTHTNARTRKGKAKPIAGKKK).

It belongs to the universal ribosomal protein uS13 family. Part of the 30S ribosomal subunit. Forms a loose heterodimer with protein S19. Forms two bridges to the 50S subunit in the 70S ribosome.

In terms of biological role, located at the top of the head of the 30S subunit, it contacts several helices of the 16S rRNA. In the 70S ribosome it contacts the 23S rRNA (bridge B1a) and protein L5 of the 50S subunit (bridge B1b), connecting the 2 subunits; these bridges are implicated in subunit movement. Contacts the tRNAs in the A and P-sites. In Erythrobacter litoralis (strain HTCC2594), this protein is Small ribosomal subunit protein uS13.